Here is a 279-residue protein sequence, read N- to C-terminus: Inhibitor of growth protein 1 (279 aa).

The interval 115–206 is disordered; sequence AHQDISDGTG…EASPADLPID (92 aa). A Glycyl lysine isopeptide (Lys-Gly) (interchain with G-Cter in SUMO2) cross-link involves residue Lys-135. Basic and acidic residues predominate over residues 154-171; that stretch reads RNNENRENASNNHDHDDI. Basic residues predominate over residues 179-191; it reads KKAKTSKKKKRSK. Residues 210–259 form a PHD-type zinc finger; that stretch reads PTYCLCNQVSYGEMIGCDNDECPIEWFHFSCVGLNHKPKGKWYCPKCRGE. Positions 213, 215, 226, 231, 237, 240, 253, and 256 each coordinate Zn(2+). The tract at residues 262 to 279 is PBR; sequence KTMDKALEKSKKERAYNR.

This sequence belongs to the ING family. As to quaternary structure, interacts with H3K4me3 and to a lesser extent with H3K4me2. Isoform 2 interacts with RSL1D1. In the adult, widely expressed with highest levels in thymus and testis.

Its subcellular location is the nucleus. In terms of biological role, isoform 1 inhibits p53-dependent transcriptional activation and may function as an oncoprotein. Isoform 2 acts as a negative growth regulator by cooperating with p53 in transcriptional activation of p53-responsive genes and may act as a tumor suppressor. This is Inhibitor of growth protein 1 (Ing1) from Mus musculus (Mouse).